A 932-amino-acid polypeptide reads, in one-letter code: MVNTLYNNNNGNNNIINNNNNNGFNNINNGQNLHRLENGHNNNIANSNNINNNNNISGNIVNNNNNNNNNNSNNNNNNNNNNNNNNNNNSNNSNNSNNINNIISSDGRRRGSINKSNMLTHSNLSNNLKIRNKLANQIDNEEKRQHILGKNLIKLTNMGIGPNNNNHNNHQNNNNSNNNNNNNNNNNNNNNNNNNNNNNNNNNNNNNNNNNNNNNNNNLVINNNKNNYINYNNGGNNYGNNTPVNYIHNNSTPRPRHSSLRTNLSDEEDSVLYSSDDSEESDYEEEEKKHLKYANRNFSGVLNNNNNINNNNMNNNINYNFNNNNNNVNNVNINNNNNNNSSNNNNNNSNNNNQLYNNHNNGNPNFYINNNNNNSNNIGHNNNNNNNNVNNNNISNNNNLNNFNNYNYNNNNNNNNNNNNNNNNNNNNNNNNNNNNNNNNNNNNNNNNNNNNNNNNNNNNNNNNNNNNNNNNNNNENYVGSSLSNSADNTESSKWRIYPSTRARQRSIASEEDSLGSRRSSLGSANDIPNSYPISPTKQQLLHYGMQSPVYSPPNNLSPLSSPYLHHNSNNNSNNGGGNSNNNNTNFNYGGNIGLERPKTSPLSYGERDPPHVINHDRRLKTPSFIDDINENNLQQSQHQHQQQQQQPQSQQQPFYSPYQSPPSSSHGNRPKTPKIISTPEGYIISSDDGSRLVVSPPNTSISSLSSMVDDNHHNQPPLVPNFSSFQQQQQLRQLQQQQLHQQQLLQQQQQQQQQQQQVPTHQQQSQSRPQTPIYLSQQQPQNPIDLMSNRRLNSAQNMKLSVSSPQLGRDVNSSNNNKNISNNNNNNNNNNNNNNNNNNNNNNKNNNINNNSEPKKPKFPLEDEKLDRDQLINEYKESSLRLDLFVNSLDEYDQQQRDISDIDNYIYNLCLCNNLEKHDSKEDEMLFDPNL.

Disordered stretches follow at residues 26-120 (NINN…NMLT), 158-289 (MGIG…EEKK), 304-617 (NNNN…INHD), 635-720 (QQSQ…PPLV), and 802-863 (SVSS…FPLE). 2 stretches are compositionally biased toward low complexity: residues 41–105 (NNNI…IISS) and 163–241 (NNNN…YGNN). Positions 242 to 253 (TPVNYIHNNSTP) are enriched in polar residues. A compositionally biased stretch (acidic residues) spans 265-285 (SDEEDSVLYSSDDSEESDYEE). A compositionally biased stretch (low complexity) spans 304-475 (NNNNINNNNM…NNNNNNNNNN (172 aa)). 2 stretches are compositionally biased toward polar residues: residues 476 to 492 (ENYV…NTES) and 527 to 540 (DIPN…TKQQ). A compositionally biased stretch (low complexity) spans 548–590 (SPVYSPPNNLSPLSSPYLHHNSNNNSNNGGGNSNNNNTNFNYG). Over residues 606–617 (GERDPPHVINHD) the composition is skewed to basic and acidic residues. 3 stretches are compositionally biased toward low complexity: residues 635–666 (QQSQ…PSSS), 696–707 (SPPNTSISSLSS), and 813–853 (NSSN…NNNS). Positions 854 to 863 (EPKKPKFPLE) are enriched in basic and acidic residues.

This is an uncharacterized protein from Dictyostelium discoideum (Social amoeba).